The primary structure comprises 1351 residues: Alpha-latrotoxin-Lh1a (1351 aa).

The first 7 residues, 1–7 (SLVRMRR), serve as a signal peptide directing secretion. Residues 4–7 (RMRR) are furin-like endopeptidase recognition region. A helix H8 is the probable transmembrane region of the tetrameric pore inserted in the target cell membrane region spans residues 226 to 245 (VLYALLYGTQTYVSVMFFLL). Cys401 and Cys1054 form a disulfide bridge. ANK repeat units follow at residues 446 to 477 (LYNT…ATFE), 478 to 509 (QGRT…ELNQ), 513 to 542 (KGYT…SINS), 547 to 577 (FLQT…NINE), 581 to 610 (DGFT…DLNA), 614 to 644 (KGLT…DVNA), 648 to 678 (NNMT…NADV), 683 to 711 (GLLS…NVNV), 717 to 746 (GGIT…NIEQ), 750 to 779 (EKYT…NFEA), 783 to 812 (SGAT…NWRD), 816 to 846 (NGQM…VLDI), 850 to 879 (NSDT…DINT), 883 to 912 (TGHA…NVYI), 916 to 945 (DGIN…KFEW), 959 to 991 (EECA…GNFA), 992 to 1019 (ICGP…DLNV), 1023 to 1052 (KPDT…KVNH), 1056 to 1085 (NGMT…DFRR), 1089 to 1119 (LGAT…DIDI), 1125 to 1154 (DKET…DMTI), and 1158 to 1187 (YDKT…KFRR). Residues 1184 to 1187 (KFRR) form a furin-like endopeptidase recognition region region. Residues 1188-1351 (EYKSSYGEHS…LGSVIMNSHS (164 aa)) constitute a propeptide that is removed on maturation.

Belongs to the cationic peptide 01 (latrotoxin) family. 03 (alpha-latrotoxin) subfamily. In terms of assembly, homotetramer in membranes. In terms of processing, processed by furin-like proteases at both the N- and C-termini. As to expression, expressed in venom gland, cephalothorax, and abdomen tissues from both males and females.

Its subcellular location is the secreted. It localises to the target cell membrane. Its function is as follows. Presynaptic neurotoxin that causes massive release of neurotransmitters from vertebrate (but not invertebrate) nerve terminals and endocrine cells via a complex mechanism involving activation of receptor(s) and toxin insertion into the plasma membrane with subsequent pore formation. Binds to neurexin-1-alpha (NRXN1) in a calcium dependent manner, adhesion G protein-coupled receptor L1 (ADGRL1, also termed latrophilin-1 and calcium-independent receptor of latrotoxin (CIRL)), and receptor-type tyrosine-protein phosphatase S (PTPRS), also termed PTP sigma. NRXN1 and PTPRS are suggested to provide a platform for binding and subsequent pore formation events. In contrast, binding to ADGRL1 does not involve oligomerization and channel formation, but direct downstream stimulation of the synaptic fusion machinery. Induces rapid muscle contracture and loss of twitch tension when added to the isolated and indirectly stimulated chick biventer cervicis nerve-muscle preparation. The polypeptide is Alpha-latrotoxin-Lh1a (Latrodectus hasselti (Redback spider)).